The following is a 308-amino-acid chain: Protein translocase subunit SecF (308 aa).

6 consecutive transmembrane segments (helical) span residues 23-42, 140-160, 164-184, 194-214, 246-266, and 272-292; these read VSYS…IGIY, IEAG…YIGV, WYFG…ALGF, LSTI…SVVI, ILTV…GGKA, and VLVF…SAPI.

The protein belongs to the SecD/SecF family. SecF subfamily. In terms of assembly, forms a complex with SecD. Part of the essential Sec protein translocation apparatus which comprises SecA, SecYEG and auxiliary proteins SecDF-YajC and YidC.

The protein localises to the cell inner membrane. Part of the Sec protein translocase complex. Interacts with the SecYEG preprotein conducting channel. SecDF uses the proton motive force (PMF) to complete protein translocation after the ATP-dependent function of SecA. The polypeptide is Protein translocase subunit SecF (Rickettsia typhi (strain ATCC VR-144 / Wilmington)).